We begin with the raw amino-acid sequence, 383 residues long: 8-amino-7-oxononanoate synthase (383 aa).

Arg23 is a substrate binding site. 110–111 (GF) is a pyridoxal 5'-phosphate binding site. His135 contacts substrate. Residues Ser181, His209, and Thr235 each coordinate pyridoxal 5'-phosphate. Lys238 carries the post-translational modification N6-(pyridoxal phosphate)lysine. Thr351 provides a ligand contact to substrate.

This sequence belongs to the class-II pyridoxal-phosphate-dependent aminotransferase family. BioF subfamily. Homodimer. Pyridoxal 5'-phosphate serves as cofactor.

It catalyses the reaction 6-carboxyhexanoyl-[ACP] + L-alanine + H(+) = (8S)-8-amino-7-oxononanoate + holo-[ACP] + CO2. It functions in the pathway cofactor biosynthesis; biotin biosynthesis. In terms of biological role, catalyzes the decarboxylative condensation of pimeloyl-[acyl-carrier protein] and L-alanine to produce 8-amino-7-oxononanoate (AON), [acyl-carrier protein], and carbon dioxide. In Aliivibrio fischeri (strain ATCC 700601 / ES114) (Vibrio fischeri), this protein is 8-amino-7-oxononanoate synthase.